Here is a 175-residue protein sequence, read N- to C-terminus: NADH-ubiquinone oxidoreductase chain 6 (175 aa).

Transmembrane regions (helical) follow at residues 1 to 21, 25 to 45, 47 to 67, 88 to 108, and 149 to 169; these read MMTYIVFILSVIFVVSFVGFS, SPIYGGLVLIVSGGVGCGIIM, FGGSFLGLMVFLIYLGGMLVV, TVMGVFLLGLLMEVMLVLYVL, and YGAWVVIVTGWSLLVGVLVIL.

The protein belongs to the complex I subunit 6 family. Core subunit of respiratory chain NADH dehydrogenase (Complex I) which is composed of 45 different subunits.

The protein resides in the mitochondrion inner membrane. It catalyses the reaction a ubiquinone + NADH + 5 H(+)(in) = a ubiquinol + NAD(+) + 4 H(+)(out). In terms of biological role, core subunit of the mitochondrial membrane respiratory chain NADH dehydrogenase (Complex I) which catalyzes electron transfer from NADH through the respiratory chain, using ubiquinone as an electron acceptor. Essential for the catalytic activity and assembly of complex I. The protein is NADH-ubiquinone oxidoreductase chain 6 (MT-ND6) of Equus caballus (Horse).